Reading from the N-terminus, the 473-residue chain is Aspartyl/glutamyl-tRNA(Asn/Gln) amidotransferase subunit B (473 aa).

Belongs to the GatB/GatE family. GatB subfamily. Heterotrimer of A, B and C subunits.

The catalysed reaction is L-glutamyl-tRNA(Gln) + L-glutamine + ATP + H2O = L-glutaminyl-tRNA(Gln) + L-glutamate + ADP + phosphate + H(+). It catalyses the reaction L-aspartyl-tRNA(Asn) + L-glutamine + ATP + H2O = L-asparaginyl-tRNA(Asn) + L-glutamate + ADP + phosphate + 2 H(+). Allows the formation of correctly charged Asn-tRNA(Asn) or Gln-tRNA(Gln) through the transamidation of misacylated Asp-tRNA(Asn) or Glu-tRNA(Gln) in organisms which lack either or both of asparaginyl-tRNA or glutaminyl-tRNA synthetases. The reaction takes place in the presence of glutamine and ATP through an activated phospho-Asp-tRNA(Asn) or phospho-Glu-tRNA(Gln). This Francisella tularensis subsp. mediasiatica (strain FSC147) protein is Aspartyl/glutamyl-tRNA(Asn/Gln) amidotransferase subunit B.